The chain runs to 571 residues: Carboxylesterase 3B (571 aa).

Residues 1–31 (MTNMRTMIPAGSSVLVWVTCLLLAFVTTVTG) form the signal peptide. Residues cysteine 100 and cysteine 127 are joined by a disulfide bond. Serine 232 (acyl-ester intermediate) is an active-site residue. Cysteine 284 and cysteine 295 are joined by a disulfide. An N-linked (GlcNAc...) asparagine glycan is attached at asparagine 311. Active-site charge relay system residues include glutamate 347 and histidine 460. The Prevents secretion from ER motif lies at 568–571 (PEEL).

It belongs to the type-B carboxylesterase/lipase family.

The protein resides in the endoplasmic reticulum lumen. The catalysed reaction is a carboxylic ester + H2O = an alcohol + a carboxylate + H(+). Functionally, involved in the detoxification of xenobiotics and in the activation of ester and amide prodrugs. This chain is Carboxylesterase 3B (Ces3b), found in Mus musculus (Mouse).